A 198-amino-acid polypeptide reads, in one-letter code: Recombination protein RecR (198 aa).

Residues 57–72 (CSICGRLTDDDPCSIC) form a C4-type zinc finger. Positions 80-175 (TTILVLEDSR…KVTRLARGLA (96 aa)) constitute a Toprim domain.

Belongs to the RecR family.

In terms of biological role, may play a role in DNA repair. It seems to be involved in an RecBC-independent recombinational process of DNA repair. It may act with RecF and RecO. The protein is Recombination protein RecR of Streptococcus pneumoniae serotype 2 (strain D39 / NCTC 7466).